A 216-amino-acid polypeptide reads, in one-letter code: DNA gyrase subunit B (216 aa).

The Toprim domain maps to 140 to 216 (SELYLVEGDS…PDKLRYHKII (77 aa)).

It belongs to the type II topoisomerase GyrB family. In terms of assembly, heterotetramer, composed of two GyrA and two GyrB chains. In the heterotetramer, GyrA contains the active site tyrosine that forms a transient covalent intermediate with DNA, while GyrB binds cofactors and catalyzes ATP hydrolysis.

The protein localises to the cytoplasm. The enzyme catalyses ATP-dependent breakage, passage and rejoining of double-stranded DNA.. A type II topoisomerase that negatively supercoils closed circular double-stranded (ds) DNA in an ATP-dependent manner to modulate DNA topology and maintain chromosomes in an underwound state. Negative supercoiling favors strand separation, and DNA replication, transcription, recombination and repair, all of which involve strand separation. Also able to catalyze the interconversion of other topological isomers of dsDNA rings, including catenanes and knotted rings. Type II topoisomerases break and join 2 DNA strands simultaneously in an ATP-dependent manner. This chain is DNA gyrase subunit B (gyrB), found in Acinetobacter sp. (strain ATCC 33308 / BD413 ErpE27).